The following is a 239-amino-acid chain: Glutathione S-transferase verG (239 aa).

The region spanning 18–101 (KPLIFVMEGR…YLSNKYDAKR (84 aa)) is the GST N-terminal domain. The GST C-terminal domain maps to 107 to 237 (NAAENLEICN…ELDSRKEIAI (131 aa)).

The protein belongs to the GST superfamily.

The enzyme catalyses RX + glutathione = an S-substituted glutathione + a halide anion + H(+). Its pathway is mycotoxin biosynthesis. Its function is as follows. Glutathione S-transferase; part of the gene cluster that mediates the biosynthesis of 11'-deoxyverticillin A, one of the dimeric epipolythiodioxopiperazines (ETPs) from the verticillin family that act as mycotoxins. 11'-deoxyverticillin A is required for normal conidiation. The nonribosomal peptide synthetase verP is speculated to be responsible for condensation of amino acids to form the carbon skeleton of verticillin, whereas the cluster-specific tailoring enzymes are involved in further modifications leading to the production of 11'-deoxyverticillin A. This Clonostachys rogersoniana protein is Glutathione S-transferase verG.